Reading from the N-terminus, the 440-residue chain is Gap junction gamma-2 protein (440 aa).

The Cytoplasmic portion of the chain corresponds to 1-21 (MTNMSWSFLTRLLEEIHNHST). The chain crosses the membrane as a helical span at residues 22–42 (FVGKVWLTVLVVFRIVLTAVG). Residues 43–78 (GESIYSDEQSKFTCNTRQPGCDNVCYDAFAPLSHVR) are Extracellular-facing. Residues 79–99 (FWVFQIVVISTPSVMYLGYAV) form a helical membrane-spanning segment. Residues 100–223 (HRLARASEQE…AQLVVRAAFE (124 aa)) lie on the Cytoplasmic side of the membrane. Residues 108 to 199 (QERRRALRRR…TPGPAGQHDG (92 aa)) are disordered. Positions 112 to 124 (RALRRRPGPRRLP) are enriched in basic residues. Acidic residues predominate over residues 150–173 (LEEDEDEEPGAPEGPGEDTEEERT). A helical transmembrane segment spans residues 224 to 244 (VAFLVGQYLLYGFEVPPFFAC). Residues 245-264 (SRQPCPHVVDCFVSRPTEKT) are Extracellular-facing. A helical membrane pass occupies residues 265-285 (VFLLVMYVVSCLCLLLNLCEM). Over 286–440 (AHLGLGSAQD…SRDGKATVWI (155 aa)) the chain is Cytoplasmic. Residues 368–440 (ADRDSPPCSG…SRDGKATVWI (73 aa)) form a disordered region. Serine 372 is modified (phosphoserine). Over residues 380-401 (ATSRGPPRAGGPASGTGSATSG) the composition is skewed to low complexity.

This sequence belongs to the connexin family. Gamma-type subfamily. As to quaternary structure, a connexon is composed of a hexamer of connexins. Interacts with TJP1. In terms of tissue distribution, mainly expressed by oligodendrocytes in the central nervous system. Expressed in optic nerve (at protein level).

It is found in the cell membrane. The protein resides in the cell junction. Its subcellular location is the gap junction. One gap junction consists of a cluster of closely packed pairs of transmembrane channels, the connexons, through which materials of low MW diffuse from one cell to a neighboring cell. May play a role in myelination in central and peripheral nervous systems. The polypeptide is Gap junction gamma-2 protein (Gjc2) (Rattus norvegicus (Rat)).